The sequence spans 298 residues: Protoheme IX farnesyltransferase (298 aa).

Helical transmembrane passes span 24-44 (VVSL…PAWP), 46-66 (WTTI…AAAF), 97-117 (LVFA…VVNP), 118-138 (LTMW…TVLL), 146-166 (IVIG…AATG), 172-192 (ALLL…ALAL), 231-251 (LLPV…VLLG), and 278-298 (IWYL…PIPV).

It belongs to the UbiA prenyltransferase family. Protoheme IX farnesyltransferase subfamily.

It is found in the cell inner membrane. The catalysed reaction is heme b + (2E,6E)-farnesyl diphosphate + H2O = Fe(II)-heme o + diphosphate. It functions in the pathway porphyrin-containing compound metabolism; heme O biosynthesis; heme O from protoheme: step 1/1. Functionally, converts heme B (protoheme IX) to heme O by substitution of the vinyl group on carbon 2 of heme B porphyrin ring with a hydroxyethyl farnesyl side group. This Thiobacillus denitrificans (strain ATCC 25259 / T1) protein is Protoheme IX farnesyltransferase.